We begin with the raw amino-acid sequence, 153 residues long: Protein Smg homolog (153 aa).

This sequence belongs to the Smg family.

The chain is Protein Smg homolog from Neisseria meningitidis serogroup B (strain ATCC BAA-335 / MC58).